The primary structure comprises 776 residues: 5-methyltetrahydropteroyltriglutamate--homocysteine methyltransferase (776 aa).

Residues 16 to 19 (RELK) and K112 each bind 5-methyltetrahydropteroyltri-L-glutamate. L-homocysteine contacts are provided by residues 432-434 (IGS) and E485. Residues 432-434 (IGS) and E485 contribute to the L-methionine site. Residues 516–517 (RC) and W562 each bind 5-methyltetrahydropteroyltri-L-glutamate. Residue D600 participates in L-homocysteine binding. D600 serves as a coordination point for L-methionine. A 5-methyltetrahydropteroyltri-L-glutamate-binding site is contributed by E606. Positions 642, 644, and 666 each coordinate Zn(2+). The Proton donor role is filled by H695. C727 serves as a coordination point for Zn(2+). A disordered region spans residues 755 to 776 (HAGAVHAGTPATRAEHAESALA). Residues 767 to 776 (RAEHAESALA) show a composition bias toward basic and acidic residues.

It belongs to the vitamin-B12 independent methionine synthase family. Zn(2+) is required as a cofactor.

It carries out the reaction 5-methyltetrahydropteroyltri-L-glutamate + L-homocysteine = tetrahydropteroyltri-L-glutamate + L-methionine. It participates in amino-acid biosynthesis; L-methionine biosynthesis via de novo pathway; L-methionine from L-homocysteine (MetE route): step 1/1. Functionally, catalyzes the transfer of a methyl group from 5-methyltetrahydrofolate to homocysteine resulting in methionine formation. The sequence is that of 5-methyltetrahydropteroyltriglutamate--homocysteine methyltransferase from Ralstonia nicotianae (strain ATCC BAA-1114 / GMI1000) (Ralstonia solanacearum).